The primary structure comprises 256 residues: MAQLLRRHLPVILSLILFLSKATADANFTVSRAAYYPNSDIKGTENGACEYGAFGATLNNGDVSASASLYRDGVGCGACYQVRCTNPYYCSPNGVTIVITDSGASDGTDFILSQHAFTRMAQSTDAGTALLTLGVVGIEYRRVSCTYPNKNIVFKITESSNFPNYLEFEIWYQQGNQDIIAVQLCETVNLTCQLLSRTHGAVWAAVSPPSGPLSIRMLFSSGAPRGGDTWLVPTNIVPQNWTAGATYDSGVQVQLQ.

The first 24 residues, 1–24 (MAQLLRRHLPVILSLILFLSKATA), serve as a signal peptide directing secretion. A glycan (N-linked (GlcNAc...) asparagine) is linked at Asn27. The Expansin-like EG45 domain maps to 46–150 (NGACEYGAFG…RRVSCTYPNK (105 aa)). The Expansin-like CBD domain maps to 164-249 (NYLEFEIWYQ…NWTAGATYDS (86 aa)). Residues Asn189 and Asn240 are each glycosylated (N-linked (GlcNAc...) asparagine).

Belongs to the expansin family. Expansin-like B subfamily.

Its subcellular location is the secreted. This Oryza sativa subsp. japonica (Rice) protein is Expansin-like B1 (EXLB1).